A 187-amino-acid polypeptide reads, in one-letter code: Phosphoheptose isomerase (187 aa).

The SIS domain maps to 34–187; the sequence is CIEALKNQKK…ILCSLIDESF (154 aa). Residue 49–51 coordinates substrate; it reads NGG. 2 residues coordinate Zn(2+): His58 and Glu62. Substrate is bound by residues Glu62, 91–92, 117–119, Ser122, and Gln169; these read ND and STS. Residues Gln169 and His177 each contribute to the Zn(2+) site.

It belongs to the SIS family. GmhA subfamily. As to quaternary structure, homotetramer. The cofactor is Zn(2+).

It is found in the cytoplasm. It catalyses the reaction 2 D-sedoheptulose 7-phosphate = D-glycero-alpha-D-manno-heptose 7-phosphate + D-glycero-beta-D-manno-heptose 7-phosphate. It functions in the pathway carbohydrate biosynthesis; D-glycero-D-manno-heptose 7-phosphate biosynthesis; D-glycero-alpha-D-manno-heptose 7-phosphate and D-glycero-beta-D-manno-heptose 7-phosphate from sedoheptulose 7-phosphate: step 1/1. Functionally, catalyzes the isomerization of sedoheptulose 7-phosphate in D-glycero-D-manno-heptose 7-phosphate. The chain is Phosphoheptose isomerase from Nitratiruptor sp. (strain SB155-2).